A 456-amino-acid polypeptide reads, in one-letter code: Cell adhesion molecule 1 (456 aa).

Residues 1–47 (MASAVLPSGSQCAAAAAVAAAAAPPGLRLRLLLLLLSAAALIPTGDG) form the signal peptide. The Ig-like V-type domain occupies 48 to 142 (QNLFTKDVTV…PPQESYTTIT (95 aa)). The Extracellular portion of the chain corresponds to 48-388 (QNLFTKDVTV…EEGTIGAVDH (341 aa)). C67 and C127 are oxidised to a cystine. Residues N70, N104, N116, and N168 are each glycosylated (N-linked (GlcNAc...) asparagine). 2 consecutive Ig-like C2-type domains span residues 147 to 241 (PRNL…RYLE) and 246 to 332 (PQVH…YMLY). 2 disulfides stabilise this stretch: C169–C223 and C270–C316. N307 and N311 each carry an N-linked (GlcNAc...) asparagine glycan. The helical transmembrane segment at 389–409 (AVIGGVVAVVVFAMLCLLIIL) threads the bilayer. Residues 410–456 (GRYFARHKGTYFTHEAKGADDAADADTAIINAEGGQNNSEEKKEYFI) are Cytoplasmic-facing. Phosphothreonine is present on T436. At S448 the chain carries Phosphoserine.

The protein belongs to the nectin family. Homodimer (via Ig-like V-type domain). Interacts with FARP1. Interacts (via Ig-like V-type domain) with CRTAM (via Ig-like V-type domain); the interaction competes with CRTAM homodimerization and CADM1 homodimerization. Interacts (via C-terminus) with EPB41L3/DAL1. The interaction with EPB41L3/DAL1 may act to anchor CADM1 to the actin cytoskeleton. Interacts (via C-terminus) with MPP2 (via PDZ domain). Interacts (via C-terminus) with MPP3 (via PDZ domain); this interaction connects CADM1 with DLG1. Interacts (via C-terminus) with PALS2 (via PDZ domain). N-glycosylated. In terms of processing, glycosylation at Asn-70 and Asn-104 promotes adhesive binding and synapse induction. Expressed dominantly in epithelial cells but not expressed in fibroblast cells (at protein level). Expressed in the T-cell area of lymph nodes, specifically in CD8+ and CD4- CD8- dendritic cells (at protein level). Expressed in CD8+ dendritic cells in the spleen (at protein level). Expressed in CD103+ dendritic cells in the small intestine lamina propria and mesenteric lymph nodes (at protein level). Expressed in brain, lung, kidney, testis, heart, spleen and liver, but not expressed in skeletal muscle.

It localises to the cell membrane. The protein resides in the synaptic cell membrane. Mediates homophilic cell-cell adhesion in a Ca(2+)-independent manner. Also mediates heterophilic cell-cell adhesion with CADM3 and NECTIN3 in a Ca(2+)-independent manner. Interaction with CRTAM promotes natural killer (NK) cell cytotoxicity and interferon-gamma (IFN-gamma) secretion by CD8+ T-cells in vitro as well as NK cell-mediated rejection of tumors expressing CADM1 in vivo. In mast cells, may mediate attachment to and promote communication with nerves. CADM1, together with MITF, is essential for development and survival of mast cells in vivo. By interacting with CRTAM and thus promoting the adhesion between CD8+ T-cells and CD8+ dendritic cells, regulates the retention of activated CD8+ T-cell within the draining lymph node. Required for the intestinal retention of intraepithelial CD4+ CD8+ T-cells and, to a lesser extent, intraepithelial and lamina propria CD8+ T-cells and CD4+ T-cells. Interaction with CRTAM promotes the adhesion to gut-associated CD103+ dendritic cells, which may facilitate the expression of gut-homing and adhesion molecules on T-cells and the conversion of CD4+ T-cells into CD4+ CD8+ T-cells. Acts as a synaptic cell adhesion molecule and plays a role in the formation of dendritic spines and in synapse assembly. May be involved in neuronal migration, axon growth, pathfinding, and fasciculation on the axons of differentiating neurons. May play diverse roles in the spermatogenesis including in the adhesion of spermatocytes and spermatids to Sertoli cells and for their normal differentiation into mature spermatozoa. This chain is Cell adhesion molecule 1, found in Mus musculus (Mouse).